A 453-amino-acid chain; its full sequence is Glutamyl-tRNA(Gln) amidotransferase subunit A (453 aa).

Catalysis depends on charge relay system residues lysine 53 and serine 128. Residue serine 152 is the Acyl-ester intermediate of the active site.

The protein belongs to the amidase family. GatA subfamily. Heterotrimer of A, B and C subunits.

The catalysed reaction is L-glutamyl-tRNA(Gln) + L-glutamine + ATP + H2O = L-glutaminyl-tRNA(Gln) + L-glutamate + ADP + phosphate + H(+). In terms of biological role, allows the formation of correctly charged Gln-tRNA(Gln) through the transamidation of misacylated Glu-tRNA(Gln) in organisms which lack glutaminyl-tRNA synthetase. The reaction takes place in the presence of glutamine and ATP through an activated gamma-phospho-Glu-tRNA(Gln). In Helicobacter pylori (strain P12), this protein is Glutamyl-tRNA(Gln) amidotransferase subunit A.